The primary structure comprises 510 residues: Ribonuclease Y (510 aa).

Residues 1-21 form a helical membrane-spanning segment; that stretch reads MLIYILSGLGVLVGALLGYVV. The region spanning 200 to 260 is the KH domain; that stretch reads TVSTIMLPND…LRREIAKRTI (61 aa). The HD domain occupies 326-419; sequence VLNHSIEVAL…VAAADALSAA (94 aa).

The protein belongs to the RNase Y family.

It localises to the cell membrane. Its function is as follows. Endoribonuclease that initiates mRNA decay. The polypeptide is Ribonuclease Y (Thermosipho melanesiensis (strain DSM 12029 / CIP 104789 / BI429)).